The following is a 364-amino-acid chain: MLKRTPLFSVYARCGAKTIEFGGWEMPVQFSSIKEEHEAVRTRAGLFDVSHMGEIVVRGRGSLAFLQKLMTNDVAKLRPGRAQYTLMCYEDGGTVDDLLIYQKGENDYLLVVNAANTEKDFAWLSGHVEGDVELQDVSSETAQLALQGPAAERVLQRLTDFDLAALRPFSFADGVEVSGVKALVSRTGYTGEDGFELYCKAEDAAALWEAILAAGARDSVLPCGLGARDTLRFEACLPLYGQELSDSISPVEAGLGFAVKTEKETPFIGQAVLKRQKEEGPPRRLVGIEMIDRGIPRHGYLVFADGEEVGFVTTGTQSPTLKKNIGLALVKADVAAIGREVEVDIRGKRLKANIVPIPFYRRAK.

The protein belongs to the GcvT family. The glycine cleavage system is composed of four proteins: P, T, L and H.

The catalysed reaction is N(6)-[(R)-S(8)-aminomethyldihydrolipoyl]-L-lysyl-[protein] + (6S)-5,6,7,8-tetrahydrofolate = N(6)-[(R)-dihydrolipoyl]-L-lysyl-[protein] + (6R)-5,10-methylene-5,6,7,8-tetrahydrofolate + NH4(+). The glycine cleavage system catalyzes the degradation of glycine. This chain is Aminomethyltransferase, found in Geobacillus kaustophilus (strain HTA426).